Consider the following 749-residue polypeptide: MALPLLPGNSFNRNVGKEKFHKSQHWGFCNNVMMLVSDEKPGIGGEPLLGQKIKPKCSIYPKGDGSDVPSWVAFDKQVLSFDAYLEEEVLDKSQTNYRIRYYKIYFYPEDDTIQVNEPEVKNSGLLQGTSIRRHRITLPPPDEDQFYTVYHFNVGTEVVFYGRTFKIYDCDAFTRNFLRKIGVKVNPPVQCPEDPYMKIRREVVEHVEPLRPYESLDTLKQFLQYHGKILCFFCLWDDSVSMFGDRRELILHYFLCDDTIEIKELLPHSSGRDALKMFLRRSKLPKNCPPRVYQPGQITDRAVLNSYGDFIKNQADGYLFDRYKLGKVDQEFYKDSDLSLGVTINVWGRKVLLYDCDEFTKSYYKSKYGIENFTSVSCKPPSPPPKIERKFPPYNGFGSEEDSLRNCIDLKPTPHRRNFKKFMEKDSYGSKSNILRFFAKLVTDKCVDLDRMFVISYYLGDDTISVFEPIERNSGIAGGMFLKRSRVKKPGQEVFKSELSEYIKAEELYIGVTVNVNGYLFRLLNADEYTLNYMEQNTDKYPFSNLKLALQKLKQEEGKSRELKQVFKAADSKHTNMVDYNTFRDILMSLTVGNLAEQEFVTIARHYRVPEGTCSDMDFLIALAHEKFKKNMFENFDTFIYSCVYEDREKKNVLPTKDIKRLCKSSRLPLSDDLLESLLSRFEDSEKQIDYKSFFSALNWRKNPVPELQPASYLKERCEDVWLGMPSPIPAKYIDYWTFLKDAFGLEEE.

3 DM10 domains span residues 75–182, 226–368, and 431–538; these read DKQV…RKIG, HGKI…KSKY, and KSNI…EQNT. Residues 558–593 enclose the EF-hand domain; sequence GKSRELKQVFKAADSKHTNMVDYNTFRDILMSLTVG.

In terms of assembly, microtubule inner protein component of sperm flagellar doublet microtubules. As to expression, expressed in airway epithelial cells.

The protein localises to the cytoplasm. Its subcellular location is the cytoskeleton. It is found in the cilium axoneme. It localises to the flagellum axoneme. In terms of biological role, microtubule inner protein (MIP) part of the dynein-decorated doublet microtubules (DMTs) in cilia axoneme, which is required for motile cilia beating. This Homo sapiens (Human) protein is EF-hand domain-containing family member C2.